Consider the following 276-residue polypeptide: Malonyl-[acyl-carrier protein] O-methyltransferase (276 aa).

The protein belongs to the methyltransferase superfamily.

It carries out the reaction malonyl-[ACP] + S-adenosyl-L-methionine = malonyl-[ACP] methyl ester + S-adenosyl-L-homocysteine. The protein operates within cofactor biosynthesis; biotin biosynthesis. Converts the free carboxyl group of a malonyl-thioester to its methyl ester by transfer of a methyl group from S-adenosyl-L-methionine (SAM). It allows to synthesize pimeloyl-ACP via the fatty acid synthetic pathway. The polypeptide is Malonyl-[acyl-carrier protein] O-methyltransferase (Paenibacillus sp. (strain JDR-2)).